Here is a 339-residue protein sequence, read N- to C-terminus: Geranylgeranyl pyrophosphate synthase AN1592 (339 aa).

Lys41, Arg44, and His73 together coordinate isopentenyl diphosphate. Positions 80 and 84 each coordinate Mg(2+). Position 89 (Arg89) interacts with dimethylallyl diphosphate. Arg90 is an isopentenyl diphosphate binding site. Dimethylallyl diphosphate contacts are provided by Lys192, Thr193, and Gln228. Asp231 contacts Mg(2+). Dimethylallyl diphosphate-binding residues include Asn235, Lys245, and Lys255.

This sequence belongs to the FPP/GGPP synthase family. The cofactor is Mg(2+).

The catalysed reaction is isopentenyl diphosphate + dimethylallyl diphosphate = (2E)-geranyl diphosphate + diphosphate. The enzyme catalyses isopentenyl diphosphate + (2E)-geranyl diphosphate = (2E,6E)-farnesyl diphosphate + diphosphate. It catalyses the reaction isopentenyl diphosphate + (2E,6E)-farnesyl diphosphate = (2E,6E,10E)-geranylgeranyl diphosphate + diphosphate. It participates in secondary metabolite biosynthesis. Geranylgeranyl pyrophosphate synthase; part of the gene cluster that mediates the biosynthesis of erinacines, cyathane-xylosides that show unique biological activities, including leishmanicidal activity, stimulating activity for nerve growth-factor synthesis, and agonistic activity toward the kappa opioid receptor. The geranylgeranyl diphosphate (GGPP) synthase eriE catalyzes the first step in erinacines biosynthesis via conversion of farnesyl pyrophosphate and isopentyl pyrophosphate into geranylgeranyl pyrophosphate (GGPP). GGPP is then substrate of the diterpene cyclase eriG for the production of cyatha-3,12-diene. The cytochrome P450 monooxygenase eriI then hydroxylates cyatha-3,12-diene at C-14 of the seven-membered ring to produce erinacol, which is further hydroxylated at C-15 by the cytochrome P450 monooxygenase eriC to yield cyathadiol. The cytochrome P450 monooxygenase eriA then catalyzes C-11 hydroxylation in the presence of the short chain dehydrogenase/reductase (SDR) eriH, which leads to the production of cyathatriol. The acetyltransferase eriL converts cyathatriol into 11-O-acetyl-cyathatriol. The SDR eriH catalyzes further oxidation of 11-O-acetyl-cyathatriol into 1-O-acetylcyathin A3. Finally, the glycosyl transferase eriJ tranfers xylose from UDP-xylose onto C-14 of 11-O-acetyl-cyathatriol to form eracine Q. EriJ is also able to convert 11-O-acetyl-cyathatriol to eracine Q2 by using UDP-D-glucose as cosubstrate, but at a lower rate. In the absence of eriL and eriJ, the SDR eriH is able to convert cyathatriol to cyathin A3; this is likely a switching mechanism in the biosynthesis of cyathins (C-14 ketogroup)and erinacines (C-14 glycosylated group). The roles of the SDR eriB, the polyprenyl transferase eriF and the dehydrogenase eriK have still to be identified. In Hericium erinaceus (Lion's mane mushroom), this protein is Geranylgeranyl pyrophosphate synthase AN1592.